Here is a 439-residue protein sequence, read N- to C-terminus: Putative phosphatidate cytidylyltransferase (439 aa).

The interval 1–37 is disordered; the sequence is MARKRTNKRNNSDKENGNVGVVQNKDSASSKTTEPAR. A Phosphoserine modification is found at Ser12. Residues 24 to 33 show a composition bias toward polar residues; that stretch reads NKDSASSKTT. The next 7 helical transmembrane spans lie at 52 to 71, 76 to 98, 110 to 130, 145 to 165, 180 to 199, 245 to 265, and 321 to 341; these read FITR…TALA, WVVL…IASV, FINW…SIYA, LVLH…VLFV, FCWT…FMIN, GFLG…YVLM, and FHLA…GFFA.

Belongs to the CDS family. Requires Mg(2+) as cofactor.

Its subcellular location is the endoplasmic reticulum membrane. The catalysed reaction is a 1,2-diacyl-sn-glycero-3-phosphate + CTP + H(+) = a CDP-1,2-diacyl-sn-glycerol + diphosphate. The protein operates within phospholipid metabolism; CDP-diacylglycerol biosynthesis; CDP-diacylglycerol from sn-glycerol 3-phosphate: step 3/3. Its function is as follows. Supplies CDP-diacylglycerol, which may play an important role as both a precursor to phosphoinositide biosynthesis in the plasma membrane and as a negative effector of phosphatidylinositol 4-kinase activity, thereby exerting an effect on cell proliferation via a lipid-dependent signal transduction cascade. This chain is Putative phosphatidate cytidylyltransferase, found in Schizosaccharomyces pombe (strain 972 / ATCC 24843) (Fission yeast).